Consider the following 325-residue polypeptide: 5-dehydro-2-deoxygluconokinase (325 aa).

This sequence belongs to the carbohydrate kinase PfkB family.

It catalyses the reaction 5-dehydro-2-deoxy-D-gluconate + ATP = 6-phospho-5-dehydro-2-deoxy-D-gluconate + ADP + H(+). The protein operates within polyol metabolism; myo-inositol degradation into acetyl-CoA; acetyl-CoA from myo-inositol: step 5/7. Its function is as follows. Catalyzes the phosphorylation of 5-dehydro-2-deoxy-D-gluconate (2-deoxy-5-keto-D-gluconate or DKG) to 6-phospho-5-dehydro-2-deoxy-D-gluconate (DKGP). This Listeria innocua serovar 6a (strain ATCC BAA-680 / CLIP 11262) protein is 5-dehydro-2-deoxygluconokinase.